A 417-amino-acid polypeptide reads, in one-letter code: Cytochrome b-c1 complex subunit 2, mitochondrial (417 aa).

Residues 1 to 22 constitute a mitochondrion transit peptide; the sequence is MTRGVPRLAVAARHFSTAEAAG.

Belongs to the peptidase M16 family. UQCRC2/QCR2 subfamily. Component of the ubiquinol-cytochrome c oxidoreductase (cytochrome b-c1 complex, complex III, CIII), a multisubunit enzyme composed of 3 respiratory subunits cytochrome b, cytochrome c1 and Rieske protein, 2 core protein subunits, and additional low-molecular weight protein subunits. The complex exists as an obligatory dimer and forms supercomplexes (SCs) in the inner mitochondrial membrane with cytochrome c oxidase (complex IV, CIV).

Its subcellular location is the mitochondrion inner membrane. In terms of biological role, component of the ubiquinol-cytochrome c oxidoreductase, a multisubunit transmembrane complex that is part of the mitochondrial electron transport chain which drives oxidative phosphorylation. The respiratory chain contains 3 multisubunit complexes succinate dehydrogenase (complex II, CII), ubiquinol-cytochrome c oxidoreductase (cytochrome b-c1 complex, complex III, CIII) and cytochrome c oxidase (complex IV, CIV), that cooperate to transfer electrons derived from NADH and succinate to molecular oxygen, creating an electrochemical gradient over the inner membrane that drives transmembrane transport and the ATP synthase. The cytochrome b-c1 complex catalyzes electron transfer from ubiquinol to cytochrome c, linking this redox reaction to translocation of protons across the mitochondrial inner membrane, with protons being carried across the membrane as hydrogens on the quinol. In the process called Q cycle, 2 protons are consumed from the matrix, 4 protons are released into the intermembrane space and 2 electrons are passed to cytochrome c. The chain is Cytochrome b-c1 complex subunit 2, mitochondrial (QCR2) from Yarrowia lipolytica (strain CLIB 122 / E 150) (Yeast).